The chain runs to 483 residues: Glutamate--tRNA ligase 1 (483 aa).

The 'HIGH' region signature appears at 9–19; that stretch reads PSPTGFLHIGG. Positions 238-242 match the 'KMSKS' region motif; the sequence is KLSKR. Residue Lys241 participates in ATP binding.

The protein belongs to the class-I aminoacyl-tRNA synthetase family. Glutamate--tRNA ligase type 1 subfamily. In terms of assembly, monomer.

The protein localises to the cytoplasm. It catalyses the reaction tRNA(Glu) + L-glutamate + ATP = L-glutamyl-tRNA(Glu) + AMP + diphosphate. Its function is as follows. Catalyzes the attachment of glutamate to tRNA(Glu) in a two-step reaction: glutamate is first activated by ATP to form Glu-AMP and then transferred to the acceptor end of tRNA(Glu). The polypeptide is Glutamate--tRNA ligase 1 (Bartonella henselae (strain ATCC 49882 / DSM 28221 / CCUG 30454 / Houston 1) (Rochalimaea henselae)).